The chain runs to 248 residues: MHIIQNTITILNNFVDISGVEVGQHLYWQIGNFEVHGQVLLTSWFVLAVLLGLAVLTVRDPQTIPTGQQNFAEYLLEFIRDLARTQIGEEEYISWVPFIGTLFLFIFVSNWSGALVPWGVVKLPHGELAAPTNDINTTVALALLTSVAYFYAGLAKKGLSFFGKYIQPTPILLPINILEDFTKPLSLSFRLFGNILADELVVAVLVSLVPLVVPIPVMLLGLFTSGIQALIFATLAAAYIGESLENHH.

Transmembrane regions (helical) follow at residues 38–58 (QVLL…VLTV), 96–116 (VPFI…GALV), 135–155 (INTT…AGLA), 200–220 (LVVA…VMLL), and 221–241 (GLFT…AYIG).

The protein belongs to the ATPase A chain family. F-type ATPases have 2 components, CF(1) - the catalytic core - and CF(0) - the membrane proton channel. CF(1) has five subunits: alpha(3), beta(3), gamma(1), delta(1), epsilon(1). CF(0) has four main subunits: a, b, b' and c.

It is found in the plastid. The protein localises to the chloroplast thylakoid membrane. Its function is as follows. Key component of the proton channel; it plays a direct role in the translocation of protons across the membrane. In Welwitschia mirabilis (Tree tumbo), this protein is ATP synthase subunit a, chloroplastic.